The primary structure comprises 845 residues: MELWRQCTHWLIQCRVLPPSHRVTWEGAQVCELAQALRDGVLLCQLLNNLLPQAINLREVNLRPQMSQFLCLKNIRTFLSTCCEKFGLKRSELFEAFDLFDVQDFGKVIYTLSALSWTPIAQNKGIMPFPTEDSALNDEDIYSGLSDQIDDTAEEDEDLYDCVENEEAEGDEIYEDLMRLESVPTPPKMTEYDKRCCCLREIQQTEEKYTDTLGSIQQHFMKPLQRFLKPQDMETIFVNIEELFSVHTHFLKELKDALAGPGATTLYQVFIKYKERFLVYGRYCSQVESASKHLDQVATAREDVQMKLEECSQRANNGRFTLRDLLMVPMQRVLKYHLLLQELVKHTQDATEKENLRLALDAMRDLAQCVNEVKRDNETLRQITNFQLSIENLDQSLANYGRPKIDGELKITSVERRSKTDRYAFLLDKALLICKRRGDSYDLKASVNLHSFQVRDDSSGERDNKKWSHMFLLIEDQGAQGYELFFKTRELKKKWMEQFEMAISNIYPENATANGHDFQMFSFEETTSCKACQMLLRGTFYQGYRCYRCRAPAHKECLGRVPPCGRHGQDFAGTMKKDKLHRRAQDKKRNELGLPKMEVFQEYYGIPPPPGAFGPFLRLNPGDIVELTKAEAEHNWWEGRNTATNEVGWFPCNRVHPYVHGPPQDLSVHLWYAGPMERAGAEGILTNRSDGTYLVRQRVKDTAEFAISIKYNVEVKHIKIMTSEGLYRITEKKAFRGLLELVEFYQQNSLKDCFKSLDTTLQFPYKEPERRAISKPPAGSTKYFGTAKARYDFCARDRSELSLKEGDIIKILNKKGQQGWWRGEIYGRIGWFPSNYVEEDYSEYC.

Residues Met1–Pro119 enclose the Calponin-homology (CH) domain. A DH domain is found at Lys194–Val373. Residues Arg402–Ser504 form the PH domain. Residues Gly515 to Cys564 form a Phorbol-ester/DAG-type zinc finger. In terms of domain architecture, SH3 1 spans Leu592–His660. Residues Trp671–Tyr765 enclose the SH2 domain. Residues Lys782–Ser842 form the SH3 2 domain. Phosphotyrosine is present on residues Tyr826 and Tyr844.

Interacts with SHB. Interacts with APS, DOCK2, GRB2, GRB3, DOCK2, SLA, TEC and ZNF655/VIK. Interacts with SIAH2; without leading to its degradation. Associates with BLNK, PLCG1, GRB2 and NCK1 in a B-cell antigen receptor-dependent fashion. Interacts with CBLB; which inhibits tyrosine phosphorylation and down-regulates activity. May interact with CCPG1. Interacts with CLNK. Interacts with THEMIS2. Interacts with NEK3 and this interaction is prolactin-dependent. Interacts with ITK. Interacts with PTK2B/PYK2. Interacts with HCK. Interacts with PTK2B/PYK2. Interacts (via SH2 domain) with SYK. Interacts with ANKRD54. Interacts with CD6. Interacts with isoform 2 of CRACR2A. Interacts with LCP2; this interaction plays a role in TCR-mediated cytokine production. Phosphorylated by FYN. Phosphorylated on tyrosine residues by HCK in response to IFNG and bacterial lipopolysaccharide (LPS). Widely expressed in hematopoietic cells but not in other cell types. Found in the spleen and lung.

Couples tyrosine kinase signals with the activation of the Rho/Rac GTPases, thus leading to cell differentiation and/or proliferation. The protein is Proto-oncogene vav (Vav1) of Mus musculus (Mouse).